A 234-amino-acid chain; its full sequence is Short neuropeptide F (234 aa).

The first 22 residues, 1–22, serve as a signal peptide directing secretion; it reads MYRINLTTFTLLLVLAVGSLMS. Positions 23–56 are excised as a propeptide; sequence ESLHPSDGAINDLYEYLLQREYAAPVSYADHQIK. Phenylalanine amide occurs at positions 69 and 101. Trp132 is modified (tryptophan amide). Phe165 carries the phenylalanine amide modification. Polar residues predominate over residues 181–190; it reads TTGQQAQPAN. Positions 181-234 are disordered; sequence TTGQQAQPANEASEKRAPTQRLRWGRSDPALAKDSSEDKALDVEESENTNADDK. Residue Trp204 is modified to Tryptophan amide. The propeptide occupies 207–234; sequence SDPALAKDSSEDKALDVEESENTNADDK.

Belongs to the NPY family. In terms of tissue distribution, expressed in all body parts of larva, pupae and adults.

It is found in the secreted. Plays a role in controlling food intake and regulating body size. This chain is Short neuropeptide F, found in Anopheles gambiae (African malaria mosquito).